The following is a 263-amino-acid chain: Endonuclease 8 (263 aa).

The active-site Schiff-base intermediate with DNA is the Pro-2. Glu-3 serves as the catalytic Proton donor. Lys-53 acts as the Proton donor; for beta-elimination activity in catalysis. Gln-70, Arg-125, and Asn-169 together coordinate DNA. The FPG-type zinc finger occupies Lys-229–His-263. Arg-253 functions as the Proton donor; for delta-elimination activity in the catalytic mechanism.

The protein belongs to the FPG family. Requires Zn(2+) as cofactor.

It carries out the reaction 2'-deoxyribonucleotide-(2'-deoxyribose 5'-phosphate)-2'-deoxyribonucleotide-DNA = a 3'-end 2'-deoxyribonucleotide-(2,3-dehydro-2,3-deoxyribose 5'-phosphate)-DNA + a 5'-end 5'-phospho-2'-deoxyribonucleoside-DNA + H(+). Its function is as follows. Involved in base excision repair of DNA damaged by oxidation or by mutagenic agents. Acts as a DNA glycosylase that recognizes and removes damaged bases. Has a preference for oxidized pyrimidines, such as thymine glycol, 5,6-dihydrouracil and 5,6-dihydrothymine. Has AP (apurinic/apyrimidinic) lyase activity and introduces nicks in the DNA strand. Cleaves the DNA backbone by beta-delta elimination to generate a single-strand break at the site of the removed base with both 3'- and 5'-phosphates. The chain is Endonuclease 8 from Escherichia coli (strain SE11).